The sequence spans 254 residues: Zinc import ATP-binding protein ZnuC (254 aa).

One can recognise an ABC transporter domain in the interval 5–219; sequence VELKEVCLSF…PEFARLFGRP (215 aa). 37–44 contacts ATP; that stretch reads GPNGAGKS. A compositionally biased stretch (basic and acidic residues) spans 233–242; the sequence is CDGEHHHHEP. The segment at 233–254 is disordered; that stretch reads CDGEHHHHEPQVPVIRLPSRNQ.

This sequence belongs to the ABC transporter superfamily. Zinc importer (TC 3.A.1.15.5) family. As to quaternary structure, the complex is composed of two ATP-binding proteins (ZnuC), two transmembrane proteins (ZnuB) and a solute-binding protein (ZnuA).

It localises to the cell inner membrane. It catalyses the reaction Zn(2+)(out) + ATP(in) + H2O(in) = Zn(2+)(in) + ADP(in) + phosphate(in) + H(+)(in). Functionally, part of the ABC transporter complex ZnuABC involved in zinc import. Responsible for energy coupling to the transport system. The polypeptide is Zinc import ATP-binding protein ZnuC (Aeromonas hydrophila subsp. hydrophila (strain ATCC 7966 / DSM 30187 / BCRC 13018 / CCUG 14551 / JCM 1027 / KCTC 2358 / NCIMB 9240 / NCTC 8049)).